A 57-amino-acid polypeptide reads, in one-letter code: UPF0391 membrane protein Xaut_1725 (57 aa).

A run of 2 helical transmembrane segments spans residues 4–24 and 30–50; these read WAVT…GGIA and IAKI…VAGL.

This sequence belongs to the UPF0391 family.

The protein localises to the cell membrane. This Xanthobacter autotrophicus (strain ATCC BAA-1158 / Py2) protein is UPF0391 membrane protein Xaut_1725.